The chain runs to 454 residues: Isthmin-1 (454 aa).

The first 29 residues, 1-29 (MVRLAAELLLLLGLLLLTLHITVLRGSGA), serve as a signal peptide directing secretion. Disordered stretches follow at residues 29–93 (ASDR…PRSF), 125–144 (PDSEAEKDQHPENKPSWSLP), and 161–209 (TNSG…STDG). A compositionally biased stretch (polar residues) spans 38–55 (GNNNLNLESDSTSETSFP). The span at 128-137 (EAEKDQHPEN) shows a compositional bias: basic and acidic residues. The 45-residue stretch at 208 to 252 (DGEGDWSLWSVCSVTCGNGNQKRTRSCGYACIATESRTCDRPNCP) folds into the TSP type-1 domain. 3 disulfides stabilise this stretch: cysteine 219–cysteine 246, cysteine 223–cysteine 251, and cysteine 234–cysteine 238. Positions 279–442 (LFEVDMDSCE…QKCTESPSDE (164 aa)) constitute an AMOP domain.

This sequence belongs to the isthmin family. As to quaternary structure, interacts with integrin ITGAV/ITGB5.

The protein resides in the secreted. In terms of biological role, acts as an angiogenesis inhibitor. This is Isthmin-1 (Ism1) from Mus musculus (Mouse).